Consider the following 232-residue polypeptide: MTEHTDFELLELATPYALNAVSDDERADIDRRVAAAPSPVAAAFNDEVRAVRETMAVVSAATTAEPPAHLRTAILDATKPEVRRQSRWRTAAFASAAAIAVGLGAFDLGVLTRPSPPPTVAEQVLTAPDVRTVSRPLGAGTATVVFSRDRNTGLLVMNNVAPPSRGTVYQMWLLGGAKGPRSAETMGTAAVTPSTTATLTDLGASTALAFTVEPGTGSPQPTGTILAELPLG.

At 1–90 (MTEHTDFELL…EVRRQSRWRT (90 aa)) the chain is on the cytoplasmic side. A helical transmembrane segment spans residues 91–111 (AAFASAAAIAVGLGAFDLGVL). Topologically, residues 112 to 232 (TRPSPPPTVA…GTILAELPLG (121 aa)) are extracellular.

Belongs to the anti-sigma-K factor family.

It localises to the cell membrane. In terms of biological role, an anti-sigma factor for extracytoplasmic function (ECF) sigma factor SigK. ECF sigma factors are held in an inactive form by an anti-sigma factor until released by regulated intramembrane proteolysis (RIP). However, in M.bovis this protein is probably dysfunctional, due to at least 1 of the 2 naturally occurring polymorphisms in its gene, when compared to M.tuberculosis. This leads to an increased expression of SigK-regulated genes, such as mpb70 and mpb83. RIP occurs when an extracytoplasmic signal triggers a concerted proteolytic cascade to transmit information and elicit cellular responses. The membrane-spanning regulatory substrate protein is first cut extracytoplasmically (site-1 protease, S1P), then within the membrane itself (site-2 protease, S2P, Rip1), while cytoplasmic proteases finish degrading the regulatory protein, liberating the sigma factor. In Mycobacterium bovis (strain ATCC BAA-935 / AF2122/97), this protein is Dysfunctional anti-sigma-K factor RskA (rskA).